Reading from the N-terminus, the 100-residue chain is Omega-hexatoxin-Asp2b (100 aa).

The first 23 residues, 1–23, serve as a signal peptide directing secretion; it reads MKFSKLSITLAVILTQAVFVLCG. The propeptide occupies 24 to 55; that stretch reads MKNEDFMEKGLESNELHDAIKKPVNSGKPDTE. Cystine bridges form between C60–C73, C66–C79, and C72–C84.

This sequence belongs to the neurotoxin 15 family. 02 (omega-actx) subfamily. In terms of tissue distribution, expressed by the venom gland.

The protein resides in the secreted. Potent inhibitor of insect, but not mammalian, voltage-gated calcium channels (Cav). This chain is Omega-hexatoxin-Asp2b, found in Atrax sp. (strain Illawarra) (Funnel-web spider).